Reading from the N-terminus, the 229-residue chain is Peptidase E (229 aa).

Active-site charge relay system residues include Ser-120, Asp-135, and His-157.

The protein belongs to the peptidase S51 family.

The protein localises to the cytoplasm. It carries out the reaction Dipeptidase E catalyzes the hydrolysis of dipeptides Asp-|-Xaa. It does not act on peptides with N-terminal Glu, Asn or Gln, nor does it cleave isoaspartyl peptides.. In terms of biological role, hydrolyzes dipeptides containing N-terminal aspartate residues. May play a role in allowing the cell to use peptide aspartate to spare carbon otherwise required for the synthesis of the aspartate family of amino acids. This chain is Peptidase E, found in Escherichia coli O6:K15:H31 (strain 536 / UPEC).